We begin with the raw amino-acid sequence, 275 residues long: Large ribosomal subunit protein uL2 (275 aa).

Positions 212–259 are disordered; sequence RWKGIRPTNRGVTMNPVDHPHGGGEGKTSGGRHPVTPWGQPTRGYKTR.

Belongs to the universal ribosomal protein uL2 family. As to quaternary structure, part of the 50S ribosomal subunit. Forms a bridge to the 30S subunit in the 70S ribosome.

Functionally, one of the primary rRNA binding proteins. Required for association of the 30S and 50S subunits to form the 70S ribosome, for tRNA binding and peptide bond formation. It has been suggested to have peptidyltransferase activity; this is somewhat controversial. Makes several contacts with the 16S rRNA in the 70S ribosome. This Acidobacterium capsulatum (strain ATCC 51196 / DSM 11244 / BCRC 80197 / JCM 7670 / NBRC 15755 / NCIMB 13165 / 161) protein is Large ribosomal subunit protein uL2.